We begin with the raw amino-acid sequence, 316 residues long: Probable cell division protein WhiA (316 aa).

A DNA-binding region (H-T-H motif) is located at residues 280–313 (SLKELGEMLEPPVGKSGVNHRLRKIEKIAEELRT).

The protein belongs to the WhiA family.

Involved in cell division and chromosome segregation. This chain is Probable cell division protein WhiA, found in Clostridium perfringens (strain ATCC 13124 / DSM 756 / JCM 1290 / NCIMB 6125 / NCTC 8237 / Type A).